Reading from the N-terminus, the 583-residue chain is Glucosidase 2 subunit beta (583 aa).

Positions 1-26 (MVRLNLAVVALAAGALSASASASSSA) are cleaved as a signal peptide. The cysteines at positions 91 and 115 are disulfide-linked. Residues 130–252 (NRCEKVGKEY…LTLLLDDLAK (123 aa)) are a coiled coil. An MRH domain is found at 455–562 (NKCFSKDMGE…KVATPAVCFP (108 aa)). Disulfide bonds link C457–C470, C519–C548, and C533–C560. The short motif at 580–583 (KDEL) is the Prevents secretion from ER element.

In terms of assembly, heterodimer of a catalytic subunit alpha and a subunit beta.

Its subcellular location is the endoplasmic reticulum. In terms of biological role, subunit of glucosidase 2, which cleaves sequentially the 2 innermost alpha-1,3-linked glucose residues from the Glc(2)Man(9)GlcNAc(2) oligosaccharide precursor of immature glycoproteins in the endoplasmic reticulum (ER). Specifically required for the cleavage of the final glucose. The subunit beta retains the catalytic subunit alpha in the ER. In Mycosarcoma maydis (Corn smut fungus), this protein is Glucosidase 2 subunit beta.